Here is a 463-residue protein sequence, read N- to C-terminus: L-seryl-tRNA(Sec) selenium transferase (463 aa).

N6-(pyridoxal phosphate)lysine is present on Lys295.

Belongs to the SelA family. Homodecamer; pentamer of dimers. Binds only one seryl-tRNA(Sec) per dimer. Pyridoxal 5'-phosphate is required as a cofactor.

The protein localises to the cytoplasm. The catalysed reaction is L-seryl-tRNA(Sec) + selenophosphate + H(+) = L-selenocysteinyl-tRNA(Sec) + phosphate. The protein operates within aminoacyl-tRNA biosynthesis; selenocysteinyl-tRNA(Sec) biosynthesis; selenocysteinyl-tRNA(Sec) from L-seryl-tRNA(Sec) (bacterial route): step 1/1. In terms of biological role, converts seryl-tRNA(Sec) to selenocysteinyl-tRNA(Sec) required for selenoprotein biosynthesis. The chain is L-seryl-tRNA(Sec) selenium transferase from Salmonella typhimurium (strain LT2 / SGSC1412 / ATCC 700720).